A 112-amino-acid polypeptide reads, in one-letter code: T cell receptor alpha variable 17 (112 aa).

An N-terminal signal peptide occupies residues Met1–Ser21. An Ig-like domain is found at Gln22–Asp112. Asn38 and Asn42 each carry an N-linked (GlcNAc...) asparagine glycan. Cys43 and Cys109 are joined by a disulfide.

Alpha-beta TR is a heterodimer composed of an alpha and beta chain; disulfide-linked. The alpha-beta TR is associated with the transmembrane signaling CD3 coreceptor proteins to form the TR-CD3 (TcR or TCR). The assembly of alpha-beta TR heterodimers with CD3 occurs in the endoplasmic reticulum where a single alpha-beta TR heterodimer associates with one CD3D-CD3E heterodimer, one CD3G-CD3E heterodimer and one CD247 homodimer forming a stable octameric structure. CD3D-CD3E and CD3G-CD3E heterodimers preferentially associate with TR alpha and TR beta chains, respectively. The association of the CD247 homodimer is the last step of TcR assembly in the endoplasmic reticulum and is required for transport to the cell surface.

The protein localises to the cell membrane. Functionally, v region of the variable domain of T cell receptor (TR) alpha chain that participates in the antigen recognition. Alpha-beta T cell receptors are antigen specific receptors which are essential to the immune response and are present on the cell surface of T lymphocytes. Recognize peptide-major histocompatibility (MH) (pMH) complexes that are displayed by antigen presenting cells (APC), a prerequisite for efficient T cell adaptive immunity against pathogens. Binding of alpha-beta TR to pMH complex initiates TR-CD3 clustering on the cell surface and intracellular activation of LCK that phosphorylates the ITAM motifs of CD3G, CD3D, CD3E and CD247 enabling the recruitment of ZAP70. In turn ZAP70 phosphorylates LAT, which recruits numerous signaling molecules to form the LAT signalosome. The LAT signalosome propagates signal branching to three major signaling pathways, the calcium, the mitogen-activated protein kinase (MAPK) kinase and the nuclear factor NF-kappa-B (NF-kB) pathways, leading to the mobilization of transcription factors that are critical for gene expression and essential for T cell growth and differentiation. The T cell repertoire is generated in the thymus, by V-(D)-J rearrangement. This repertoire is then shaped by intrathymic selection events to generate a peripheral T cell pool of self-MH restricted, non-autoaggressive T cells. Post-thymic interaction of alpha-beta TR with the pMH complexes shapes TR structural and functional avidity. The polypeptide is T cell receptor alpha variable 17 (Homo sapiens (Human)).